The chain runs to 165 residues: Plastocyanin, chloroplastic (165 aa).

The transit peptide at 1-66 directs the protein to the chloroplast; sequence MATVTSSAAV…AGILAGNAMA (66 aa). Residues 67-165 enclose the Plastocyanin-like domain; the sequence is AEVLLGSSDG…AGMVGKVTVN (99 aa). Residues His103, Cys150, His153, and Met158 each contribute to the Cu cation site.

This sequence belongs to the plastocyanin family. Requires Cu(2+) as cofactor.

The protein localises to the plastid. The protein resides in the chloroplast thylakoid membrane. Participates in electron transfer between P700 and the cytochrome b6-f complex in photosystem I. The chain is Plastocyanin, chloroplastic (PETE) from Silene latifolia subsp. alba (White campion).